The primary structure comprises 187 residues: UPF0301 protein ETA_28320 (187 aa).

Belongs to the UPF0301 (AlgH) family.

This chain is UPF0301 protein ETA_28320, found in Erwinia tasmaniensis (strain DSM 17950 / CFBP 7177 / CIP 109463 / NCPPB 4357 / Et1/99).